Reading from the N-terminus, the 175-residue chain is O-acetyl-ADP-ribose deacetylase (175 aa).

The 175-residue stretch at 1-175 (MAVQPEVILG…IYRRLLASYP (175 aa)) folds into the Macro domain. Substrate is bound by residues 11–12 (DI), Asn25, 33–35 (GVD), and 122–126 (STGVY). Residue Asp35 is the Proton acceptor of the active site.

This sequence belongs to the MacroD-type family. YmdB subfamily. As to quaternary structure, homodimer. Interacts with RNase III.

The catalysed reaction is 3''-O-acetyl-ADP-D-ribose + H2O = ADP-D-ribose + acetate + H(+). It catalyses the reaction 2''-O-acetyl-ADP-D-ribose + H2O = ADP-D-ribose + acetate + H(+). Functionally, deacetylates O-acetyl-ADP ribose to yield ADP-ribose and free acetate. Down-regulates ribonuclease 3 (RNase III) activity. Acts by interacting directly with the region of the ribonuclease that is required for dimerization/activation. This Klebsiella pneumoniae (strain 342) protein is O-acetyl-ADP-ribose deacetylase.